Reading from the N-terminus, the 410-residue chain is Phospho-N-acetylmuramoyl-pentapeptide-transferase (410 aa).

Transmembrane regions (helical) follow at residues Tyr-23–Gly-43, Thr-73–Ala-93, His-96–Val-116, Gly-132–Phe-152, Trp-215–Ala-235, Thr-248–Phe-268, Val-285–Ala-305, Val-307–Ala-327, Ile-332–Val-352, and Lys-387–Leu-407.

Belongs to the glycosyltransferase 4 family. MraY subfamily. Mg(2+) is required as a cofactor.

Its subcellular location is the cell inner membrane. The catalysed reaction is UDP-N-acetyl-alpha-D-muramoyl-L-alanyl-gamma-D-glutamyl-meso-2,6-diaminopimeloyl-D-alanyl-D-alanine + di-trans,octa-cis-undecaprenyl phosphate = di-trans,octa-cis-undecaprenyl diphospho-N-acetyl-alpha-D-muramoyl-L-alanyl-D-glutamyl-meso-2,6-diaminopimeloyl-D-alanyl-D-alanine + UMP. It functions in the pathway cell wall biogenesis; peptidoglycan biosynthesis. Catalyzes the initial step of the lipid cycle reactions in the biosynthesis of the cell wall peptidoglycan: transfers peptidoglycan precursor phospho-MurNAc-pentapeptide from UDP-MurNAc-pentapeptide onto the lipid carrier undecaprenyl phosphate, yielding undecaprenyl-pyrophosphoryl-MurNAc-pentapeptide, known as lipid I. This Flavobacterium johnsoniae (strain ATCC 17061 / DSM 2064 / JCM 8514 / BCRC 14874 / CCUG 350202 / NBRC 14942 / NCIMB 11054 / UW101) (Cytophaga johnsonae) protein is Phospho-N-acetylmuramoyl-pentapeptide-transferase.